A 317-amino-acid chain; its full sequence is E3 ubiquitin-protein ligase NRDP1 (317 aa).

The RING-type; degenerate zinc finger occupies Cys-18–Arg-57. The segment at Lys-78–Leu-138 adopts an SIAH-type; degenerate zinc-finger fold.

In terms of assembly, interacts with USP8, ERBB3, PRKN and BIRC6. Interacts with CSF2RB, EPOR, IL3RA, MYD88 and TBK1. Interacts with Clec16a. In terms of processing, autoubiquitinated. Autoubiquitination leads to proteasomal degradation. Deubiquitinated by USP8 to get stabilized which induces apoptosis.

It catalyses the reaction S-ubiquitinyl-[E2 ubiquitin-conjugating enzyme]-L-cysteine + [acceptor protein]-L-lysine = [E2 ubiquitin-conjugating enzyme]-L-cysteine + N(6)-ubiquitinyl-[acceptor protein]-L-lysine.. It functions in the pathway protein modification; protein ubiquitination. Acts as E3 ubiquitin-protein ligase and regulates the degradation of target proteins. Polyubiquitinates MYD88. Negatively regulates MYD88-dependent production of pro-inflammatory cytokines. Can promote TRIF-dependent production of type I interferon and inhibits infection with vesicular stomatitis virus. Also promotes activation of TBK1 and IRF3. Involved in the ubiquitination of erythropoietin (EPO) and interleukin-3 (IL-3) receptors. Thus, through maintaining basal levels of cytokine receptors, RNF41 is involved in the control of hematopoietic progenitor cell differentiation into myeloerythroid lineages. Contributes to the maintenance of steady-state ERBB3 levels by mediating its growth factor-independent degradation. Involved in the degradation of the inhibitor of apoptosis BIRC6 and thus is an important regulator of cell death by promoting apoptosis. Also acts as a PRKN modifier that accelerates its degradation, resulting in a reduction of PRKN activity, influencing the balance of intracellular redox state. The RNF41-PRKN pathway regulates autophagosome-lysosome fusion during late mitophagy. Mitophagy is a selective form of autophagy necessary for mitochondrial quality control. The sequence is that of E3 ubiquitin-protein ligase NRDP1 (Rnf41) from Mus musculus (Mouse).